The following is a 2131-amino-acid chain: Protein Ycf2 (2131 aa).

ATP is bound at residue 1484–1491 (GSIGTGRS).

The protein belongs to the Ycf2 family.

It is found in the plastid. Its subcellular location is the chloroplast stroma. In terms of biological role, probable ATPase of unknown function. Its presence in a non-photosynthetic plant (Epifagus virginiana) and experiments in tobacco indicate that it has an essential function which is probably not related to photosynthesis. The polypeptide is Protein Ycf2 (ycf2-A) (Spinacia oleracea (Spinach)).